Consider the following 236-residue polypeptide: Lipid A 4'-phosphatase (236 aa).

A run of 5 helical transmembrane segments spans residues 26–46 (FFYL…FLFF), 58–78 (FIVG…SSFF), 134–153 (YTWT…IYIG), 160–182 (IIPG…LYAR), and 200–220 (GDSI…MLCM).

This sequence belongs to the lipid A LpxF 4'-phosphatase family.

Its subcellular location is the cell inner membrane. It participates in bacterial outer membrane biogenesis; LPS lipid A biosynthesis. In terms of biological role, removes the 4'-phosphate group from lipid A species. Absence of phosphate groups in lipid A renders the bacteria resistant to host-derived cationic antimicrobial peptides (CAMP) and allows it to camouflage itself from the host innate immune response. Removal of the 4'-phosphate may be required to generate the substrate for deacylation of the pentaacyl lipid A to the tetraccylated lipid A species. This is Lipid A 4'-phosphatase from Porphyromonas gingivalis (strain ATCC 33277 / DSM 20709 / CIP 103683 / JCM 12257 / NCTC 11834 / 2561).